A 1041-amino-acid polypeptide reads, in one-letter code: Probable rhamnogalacturonate lyase C (1041 aa).

An N-terminal signal peptide occupies residues 1–21 (MFASTLRKTFVFLGLATYSAA). N-linked (GlcNAc...) asparagine glycans are attached at residues Asn-28, Asn-94, Asn-116, Asn-142, Asn-231, Asn-283, Asn-528, and Asn-634. Residues 703–728 (ISRPCPRKGGTRRRKKERKKEGKKQG) form a disordered region. The segment covering 707-720 (CPRKGGTRRRKKER) has biased composition (basic residues). An N-linked (GlcNAc...) asparagine glycan is attached at Asn-864.

Belongs to the polysaccharide lyase 4 family.

It localises to the secreted. The catalysed reaction is Endotype eliminative cleavage of L-alpha-rhamnopyranosyl-(1-&gt;4)-alpha-D-galactopyranosyluronic acid bonds of rhamnogalacturonan I domains in ramified hairy regions of pectin leaving L-rhamnopyranose at the reducing end and 4-deoxy-4,5-unsaturated D-galactopyranosyluronic acid at the non-reducing end.. In terms of biological role, pectinolytic enzymes consist of four classes of enzymes: pectin lyase, polygalacturonase, pectin methylesterase and rhamnogalacturonase. Degrades the rhamnogalacturonan I (RG-I) backbone of pectin. The polypeptide is Probable rhamnogalacturonate lyase C (rglC) (Emericella nidulans (strain FGSC A4 / ATCC 38163 / CBS 112.46 / NRRL 194 / M139) (Aspergillus nidulans)).